The following is a 367-amino-acid chain: MSRRSLTLLKNLARNANGSGIQTRSVTYMPRPGDGAPRAVTLIPGDGIGPLVTNAVEQVMEAMHAPIFFEKYDVHGEMSRVPPEVMESIRKNKVCLKGGLKTPVGGGVSSLNVQLRKELDLFASLVNCFNLPGLPTRHENVDIVVIRENTEGEYAGLEHEVVPGVVESLKVITKFCSERIAKYAFEYAYLNNRKKVTAVHKANIMKLADGLFLESCREVAKKYPSITYNEIIVDNCCMQLVAKPEQFDVMVTPNLYGNLVANTAAGIAGGTGVMPGGNVGADHAVFEQGASAGNVGKDKIVLENKANPVALLLSSAMMLRHLQFPSFADRLETAVKKVIAEGKCRTKDLGGTSTTQEVVDAVIAKLD.

A mitochondrion-targeting transit peptide spans M1–S25.

It belongs to the isocitrate and isopropylmalate dehydrogenases family. As to quaternary structure, heterooligomer of catalytic and regulatory subunits. In terms of tissue distribution, ubiquitous. Predominantly expressed in roots, stems and leaves.

It localises to the mitochondrion. Functionally, performs an essential role in the oxidative function of the citric acid cycle. This chain is Isocitrate dehydrogenase [NAD] regulatory subunit 1, mitochondrial (IDH1), found in Arabidopsis thaliana (Mouse-ear cress).